The sequence spans 502 residues: D-alanine--D-alanyl carrier protein ligase (502 aa).

150–151 (TS) lines the ATP pocket. Residue D195 coordinates D-alanine. 290–295 (NTYGPT) contacts ATP. A D-alanine-binding site is contributed by V299. Residues D381 and K490 each coordinate ATP. Residue K490 participates in D-alanine binding.

It belongs to the ATP-dependent AMP-binding enzyme family. DltA subfamily.

It is found in the cytoplasm. It carries out the reaction holo-[D-alanyl-carrier protein] + D-alanine + ATP = D-alanyl-[D-alanyl-carrier protein] + AMP + diphosphate. The protein operates within cell wall biogenesis; lipoteichoic acid biosynthesis. Its function is as follows. Catalyzes the first step in the D-alanylation of lipoteichoic acid (LTA), the activation of D-alanine and its transfer onto the D-alanyl carrier protein (Dcp) DltC. In an ATP-dependent two-step reaction, forms a high energy D-alanyl-AMP intermediate, followed by transfer of the D-alanyl residue as a thiol ester to the phosphopantheinyl prosthetic group of the Dcp. D-alanylation of LTA plays an important role in modulating the properties of the cell wall in Gram-positive bacteria, influencing the net charge of the cell wall. In Bacillus licheniformis (strain ATCC 14580 / DSM 13 / JCM 2505 / CCUG 7422 / NBRC 12200 / NCIMB 9375 / NCTC 10341 / NRRL NRS-1264 / Gibson 46), this protein is D-alanine--D-alanyl carrier protein ligase.